Here is a 238-residue protein sequence, read N- to C-terminus: 3-dehydroquinate dehydratase (238 aa).

3-dehydroquinate contacts are provided by residues 35–37 (ELR) and Arg-68. His-131 functions as the Proton donor/acceptor in the catalytic mechanism. The active-site Schiff-base intermediate with substrate is Lys-158. 3-dehydroquinate-binding residues include Arg-200 and Gln-223.

The protein belongs to the type-I 3-dehydroquinase family. Homodimer.

The enzyme catalyses 3-dehydroquinate = 3-dehydroshikimate + H2O. It functions in the pathway metabolic intermediate biosynthesis; chorismate biosynthesis; chorismate from D-erythrose 4-phosphate and phosphoenolpyruvate: step 3/7. Involved in the third step of the chorismate pathway, which leads to the biosynthesis of aromatic amino acids. Catalyzes the cis-dehydration of 3-dehydroquinate (DHQ) and introduces the first double bond of the aromatic ring to yield 3-dehydroshikimate. The polypeptide is 3-dehydroquinate dehydratase (Staphylococcus epidermidis (strain ATCC 35984 / DSM 28319 / BCRC 17069 / CCUG 31568 / BM 3577 / RP62A)).